Reading from the N-terminus, the 352-residue chain is tRNA (guanine-N(1)-)-methyltransferase (352 aa).

S-adenosyl-L-methionine-binding positions include Gly-109 and 129 to 134 (IGDYVL).

The protein belongs to the RNA methyltransferase TrmD family. In terms of assembly, homodimer.

It localises to the cytoplasm. It catalyses the reaction guanosine(37) in tRNA + S-adenosyl-L-methionine = N(1)-methylguanosine(37) in tRNA + S-adenosyl-L-homocysteine + H(+). Functionally, specifically methylates guanosine-37 in various tRNAs. The polypeptide is tRNA (guanine-N(1)-)-methyltransferase (Chlamydia trachomatis serovar L2 (strain ATCC VR-902B / DSM 19102 / 434/Bu)).